Consider the following 210-residue polypeptide: N-(5'-phosphoribosyl)anthranilate isomerase (210 aa).

The protein belongs to the TrpF family.

It catalyses the reaction N-(5-phospho-beta-D-ribosyl)anthranilate = 1-(2-carboxyphenylamino)-1-deoxy-D-ribulose 5-phosphate. The protein operates within amino-acid biosynthesis; L-tryptophan biosynthesis; L-tryptophan from chorismate: step 3/5. This chain is N-(5'-phosphoribosyl)anthranilate isomerase, found in Staphylococcus aureus (strain MRSA252).